The chain runs to 604 residues: Elongation factor 4 (604 aa).

Residues 7 to 189 enclose the tr-type G domain; that stretch reads KNIRNFCIIA…QIVTKIPAPS (183 aa). GTP-binding positions include 19–24 and 136–139; these read DHGKST and NKID.

The protein belongs to the TRAFAC class translation factor GTPase superfamily. Classic translation factor GTPase family. LepA subfamily.

Its subcellular location is the cell membrane. It catalyses the reaction GTP + H2O = GDP + phosphate + H(+). In terms of biological role, required for accurate and efficient protein synthesis under certain stress conditions. May act as a fidelity factor of the translation reaction, by catalyzing a one-codon backward translocation of tRNAs on improperly translocated ribosomes. Back-translocation proceeds from a post-translocation (POST) complex to a pre-translocation (PRE) complex, thus giving elongation factor G a second chance to translocate the tRNAs correctly. Binds to ribosomes in a GTP-dependent manner. The sequence is that of Elongation factor 4 from Lachnospira eligens (strain ATCC 27750 / DSM 3376 / VPI C15-48 / C15-B4) (Eubacterium eligens).